Here is a 277-residue protein sequence, read N- to C-terminus: Indole-3-glycerol phosphate synthase (277 aa).

Belongs to the TrpC family.

The catalysed reaction is 1-(2-carboxyphenylamino)-1-deoxy-D-ribulose 5-phosphate + H(+) = (1S,2R)-1-C-(indol-3-yl)glycerol 3-phosphate + CO2 + H2O. It participates in amino-acid biosynthesis; L-tryptophan biosynthesis; L-tryptophan from chorismate: step 4/5. This chain is Indole-3-glycerol phosphate synthase, found in Pseudomonas putida (strain ATCC 47054 / DSM 6125 / CFBP 8728 / NCIMB 11950 / KT2440).